The primary structure comprises 77 residues: Acyl carrier protein (77 aa).

Residues 2-77 form the Carrier domain; the sequence is SDIEQRVKNV…LAIDYVKSHQ (76 aa). An O-(pantetheine 4'-phosphoryl)serine modification is found at serine 37.

Belongs to the acyl carrier protein (ACP) family. Post-translationally, 4'-phosphopantetheine is transferred from CoA to a specific serine of apo-ACP by AcpS. This modification is essential for activity because fatty acids are bound in thioester linkage to the sulfhydryl of the prosthetic group.

It is found in the cytoplasm. The protein operates within lipid metabolism; fatty acid biosynthesis. Carrier of the growing fatty acid chain in fatty acid biosynthesis. This is Acyl carrier protein from Leucothrix mucor.